Reading from the N-terminus, the 238-residue chain is Triggering receptor expressed on myeloid cells 1 (238 aa).

The signal sequence occupies residues 1 to 20 (MRSARLGRLLWMLFITEIQA). Positions 21–129 (ATELPEEKYI…KDPIILFYPV (109 aa)) constitute an Ig-like V-type domain. Residues 21 to 210 (ATELPEEKYI…DITRDTEISL (190 aa)) lie on the Extracellular side of the membrane. A disulfide bridge connects residues C41 and C113. Residue N135 is glycosylated (N-linked (GlcNAc...) asparagine). Residues 141-169 (PASAETPTQSCSPTTTLPPTTTTNRHRPR) are disordered. Residues 146–163 (TPTQSCSPTTTLPPTTTT) show a composition bias toward low complexity. N198 carries an N-linked (GlcNAc...) asparagine glycan. Residues 211 to 231 (ILPAVCGLLSKSLVFIVLFVV) form a helical membrane-spanning segment. Over 232-238 (TRMSFTP) the chain is Cytoplasmic.

As to quaternary structure, monomer. Homomultimer; when activated. Interacts with TYROBP/DAP12. Interacts with TLR4.

It is found in the cell membrane. Functionally, cell surface receptor that plays important roles in innate and adaptive immunity by amplifying inflammatory responses. Upon activation by various ligands such as PGLYRP1, HMGB1 or HSP70, multimerizes and forms a complex with transmembrane adapter TYROBP/DAP12. In turn, initiates a SYK-mediated cascade of tyrosine phosphorylation, activating multiple downstream mediators such as BTK, MAPK1, MAPK3 or phospholipase C-gamma. This cascade promotes the neutrophil- and macrophage-mediated release of pro-inflammatory cytokines and/or chemokines, as well as their migration and thereby amplifies inflammatory responses that are triggered by bacterial and fungal infections. By also promoting the amplification of inflammatory signals that are initially triggered by Toll-like receptor (TLR) and NOD-like receptor engagement, plays a major role in the pathophysiology of acute and chronic inflammatory diseases of different etiologies including septic shock and atherosclerosis. This chain is Triggering receptor expressed on myeloid cells 1 (TREM1), found in Sus scrofa (Pig).